Here is a 397-residue protein sequence, read N- to C-terminus: Lysosomal acid lipase/cholesteryl ester hydrolase (397 aa).

Positions 1–25 (MQLLGRVICFVVGILLSGGPTGTIS) are cleaved as a signal peptide. The propeptide at 26 to 72 (AVDPEANMNVTEIIMHWGYPEHSVQTGDGYILGVHRIPHGRKNQFDK) is removed in mature form. Residues Asn34, Asn99, and Asn159 are each glycosylated (N-linked (GlcNAc...) asparagine). Residues 84–378 (HGFLADSSNW…EWDHLDFIWG (295 aa)) form the AB hydrolase-1 domain. Residue Ser172 is the Charge relay system of the active site. N-linked (GlcNAc...) asparagine glycans are attached at residues Asn271 and Asn319. Residue His372 is the Charge relay system of the active site.

This sequence belongs to the AB hydrolase superfamily. Lipase family. In terms of assembly, monomer. Post-translationally, glycosylation is not essential for catalytic activity.

Its subcellular location is the lysosome. The enzyme catalyses a sterol ester + H2O = a sterol + a fatty acid + H(+). It catalyses the reaction cholesteryl (9Z-octadecenoate) + H2O = cholesterol + (9Z)-octadecenoate + H(+). It carries out the reaction a triacylglycerol + H2O = a 1,2-diacylglycerol + a fatty acid + H(+). The catalysed reaction is 1,2-di-(9Z-octadecenoyl)-glycerol + (9Z)-octadecenoate + H(+) = 1,2,3-tri-(9Z-octadecenoyl)-glycerol + H2O. The enzyme catalyses a 1,2-diacylglycerol + H2O = a 1-acylglycerol + a fatty acid + H(+). It catalyses the reaction 1,2-di-(9Z-octadecenoyl)-glycerol + H2O = 1-(9Z-octadecenoyl)-glycerol + (9Z)-octadecenoate + H(+). It carries out the reaction a 1,3-diacylglycerol + H2O = a 1-acylglycerol + a fatty acid + H(+). The catalysed reaction is 1,3-di-(9Z-octadecenoyl)-glycerol + H2O = 1-(9Z-octadecenoyl)-glycerol + (9Z)-octadecenoate + H(+). Functionally, catalyzes the deacylation of cholesteryl ester core lipids of endocytosed low density lipoproteins to generate free fatty acids and cholesterol. Hydrolyzes triglycerides (1,2,3-triacylglycerol) and diglycerides (such as 1,2-diacylglycerol and 1,3-diacylglycerol) with preference for the acyl moieties at the sn-1 or sn-3 positions. The polypeptide is Lysosomal acid lipase/cholesteryl ester hydrolase (Lipa) (Rattus norvegicus (Rat)).